Consider the following 560-residue polypeptide: Cilia- and flagella-associated protein 184 (560 aa).

A compositionally biased stretch (basic and acidic residues) spans 1-12; sequence MEGGSEHTKDPG. A disordered region spans residues 1 to 209; it reads MEGGSEHTKD…QEEGKPLGGR (209 aa). Composition is skewed to acidic residues over residues 41–61 and 101–110; these read GELE…EEEA and EPEEPAEAGA. 2 stretches are compositionally biased toward basic and acidic residues: residues 127-144 and 179-209; these read AEAR…KEVR and ETRR…LGGR. Coiled-coil stretches lie at residues 357 to 481 and 510 to 536; these read QAAL…QGRD and DSLL…LKRH.

Belongs to the CFAP184 family. In terms of assembly, forms a complex with CFAP263; the interaction is required for functional activity in cilia.

It is found in the cell projection. The protein localises to the cilium. The protein resides in the cytoplasm. It localises to the cytoskeleton. Its subcellular location is the microtubule organizing center. It is found in the centrosome. In complex with CFAP263, acts as a regulator of ciliary beating that connects radial spoke 3 (RS3) to the inner dynein arm (IDA) and the nexin-dynein regulatory complex (N-DRC). The complex is positioned parallel to N-DRC and forms a connection between the arch at the base of RS3, the IDA tail and N-DRC. The sequence is that of Cilia- and flagella-associated protein 184 (CFAP184) from Macaca fascicularis (Crab-eating macaque).